The following is a 146-amino-acid chain: UPF0260 protein Swoo_2117 (146 aa).

The protein belongs to the UPF0260 family.

This is UPF0260 protein Swoo_2117 from Shewanella woodyi (strain ATCC 51908 / MS32).